The following is a 75-amino-acid chain: Large ribosomal subunit protein bL31 (75 aa).

It belongs to the bacterial ribosomal protein bL31 family. Type A subfamily. As to quaternary structure, part of the 50S ribosomal subunit.

Its function is as follows. Binds the 23S rRNA. This chain is Large ribosomal subunit protein bL31, found in Rhodopseudomonas palustris (strain BisB18).